We begin with the raw amino-acid sequence, 334 residues long: ADP-L-glycero-D-manno-heptose-6-epimerase (334 aa).

Residues 11–12 (FI), 32–33 (DN), Lys-39, Lys-54, 77–81 (QGACS), and Asn-94 each bind NADP(+). Tyr-141 acts as the Proton acceptor in catalysis. Residue Lys-145 coordinates NADP(+). Asn-171 provides a ligand contact to substrate. Positions 172 and 180 each coordinate NADP(+). Lys-180 acts as the Proton acceptor in catalysis. Substrate is bound by residues Arg-182, His-189, 203–206 (FGSN), Arg-216, and Tyr-295.

It belongs to the NAD(P)-dependent epimerase/dehydratase family. HldD subfamily. As to quaternary structure, homopentamer. It depends on NADP(+) as a cofactor.

The enzyme catalyses ADP-D-glycero-beta-D-manno-heptose = ADP-L-glycero-beta-D-manno-heptose. The protein operates within nucleotide-sugar biosynthesis; ADP-L-glycero-beta-D-manno-heptose biosynthesis; ADP-L-glycero-beta-D-manno-heptose from D-glycero-beta-D-manno-heptose 7-phosphate: step 4/4. Functionally, catalyzes the interconversion between ADP-D-glycero-beta-D-manno-heptose and ADP-L-glycero-beta-D-manno-heptose via an epimerization at carbon 6 of the heptose. This is ADP-L-glycero-D-manno-heptose-6-epimerase from Neisseria gonorrhoeae (strain ATCC 700825 / FA 1090).